The chain runs to 520 residues: 3-phosphoshikimate 1-carboxyvinyltransferase, chloroplastic (520 aa).

The N-terminal 76 residues, 1–76 (MAQVSRICNG…KVMSSVSTAE (76 aa)), are a transit peptide targeting the chloroplast. The segment at 20 to 39 (LSKSSQRKSPLSVSLKTQQH) is disordered. Residues K99, S100, and R104 each contribute to the 3-phosphoshikimate site. K99 is a phosphoenolpyruvate binding site. Residues G177 and R207 each coordinate phosphoenolpyruvate. 3-phosphoshikimate-binding residues include S254, S255, Q256, S282, D407, and K434. A phosphoenolpyruvate-binding site is contributed by Q256. D407 acts as the Proton acceptor in catalysis. 3 residues coordinate phosphoenolpyruvate: R438, R480, and K505.

It belongs to the EPSP synthase family.

The protein resides in the plastid. The protein localises to the chloroplast. It catalyses the reaction 3-phosphoshikimate + phosphoenolpyruvate = 5-O-(1-carboxyvinyl)-3-phosphoshikimate + phosphate. Its pathway is metabolic intermediate biosynthesis; chorismate biosynthesis; chorismate from D-erythrose 4-phosphate and phosphoenolpyruvate: step 6/7. Functionally, catalyzes the transfer of the enolpyruvyl moiety of phosphoenolpyruvate (PEP) to the 5-hydroxyl of shikimate-3-phosphate (S3P) to produce enolpyruvyl shikimate-3-phosphate and inorganic phosphate. This chain is 3-phosphoshikimate 1-carboxyvinyltransferase, chloroplastic, found in Arabidopsis thaliana (Mouse-ear cress).